Consider the following 396-residue polypeptide: Phosphoglycerate kinase (396 aa).

Substrate is bound by residues 21–23 (DFN), arginine 36, 59–62 (HLGK), arginine 119, and arginine 156. ATP contacts are provided by residues lysine 206, glutamate 325, and 352–355 (GGDS).

Belongs to the phosphoglycerate kinase family. In terms of assembly, monomer.

Its subcellular location is the cytoplasm. It carries out the reaction (2R)-3-phosphoglycerate + ATP = (2R)-3-phospho-glyceroyl phosphate + ADP. It functions in the pathway carbohydrate degradation; glycolysis; pyruvate from D-glyceraldehyde 3-phosphate: step 2/5. The chain is Phosphoglycerate kinase from Staphylococcus haemolyticus (strain JCSC1435).